The chain runs to 1024 residues: Multidrug resistance protein MdtC (1024 aa).

The next 11 helical transmembrane spans lie at 15 to 35 (WLLT…LPVA), 333 to 353 (EVEQ…FAFL), 360 to 380 (LIPA…MYLC), 387 to 407 (LSLM…IVVL), 431 to 451 (VGFT…PLLL), 463 to 483 (FAIT…TLTP), 528 to 548 (WGLL…ISIP), 853 to 873 (LWLI…LYES), 897 to 917 (LFNA…IGIV), 953 to 973 (PIIM…LGSG), and 984 to 1004 (ITIV…TPVV).

Belongs to the resistance-nodulation-cell division (RND) (TC 2.A.6) family. MdtC subfamily. Part of a tripartite efflux system composed of MdtA, MdtB and MdtC. MdtC forms a heteromultimer with MdtB.

It is found in the cell inner membrane. The sequence is that of Multidrug resistance protein MdtC from Erwinia tasmaniensis (strain DSM 17950 / CFBP 7177 / CIP 109463 / NCPPB 4357 / Et1/99).